A 249-amino-acid polypeptide reads, in one-letter code: Transcription initiation factor TFIID subunit 9B (249 aa).

Residue Met1 is modified to N-acetylmethionine. Ser147 is subject to Phosphoserine. Residues 148–171 are disordered; that stretch reads AVSSRPTTPPVAPPQAVSGPNKAA. Thr172 is modified (phosphothreonine). Ser175 carries the phosphoserine modification. Residues 224–234 are compositionally biased toward polar residues; the sequence is VSSQNTATDSN. Residues 224 to 249 form a disordered region; it reads VSSQNTATDSNPLKRKHDDDDDNDTM.

The protein belongs to the TAF9 family. As to quaternary structure, binds TAF5 and TAF6. Component of TFIID and the TATA-binding protein-free TAF complex (TFTC). TFIID is composed of TATA binding protein (TBP) and a number of TBP-associated factors (TAFs). Binds N-terminal domain of p53/TP53 which is essential for transcription.

Its subcellular location is the nucleus. Its function is as follows. Essential for cell viability. TAF9 and TAF9B are involved in transcriptional activation as well as repression of distinct but overlapping sets of genes. May have a role in gene regulation associated with apoptosis. TAFs are components of the transcription factor IID (TFIID) complex, the TBP-free TAFII complex (TFTC), the PCAF histone acetylase complex and the STAGA transcription coactivator-HAT complex. TFIID or TFTC are essential for the regulation of RNA polymerase II-mediated transcription. The protein is Transcription initiation factor TFIID subunit 9B (Taf9b) of Mus musculus (Mouse).